A 346-amino-acid chain; its full sequence is Fructose-1,6-bisphosphatase class 1 (346 aa).

Mg(2+) contacts are provided by glutamate 96, aspartate 119, leucine 121, and aspartate 122. Substrate is bound by residues 122–125 (DGSS), asparagine 214, tyrosine 247, and lysine 277. Glutamate 283 is a binding site for Mg(2+).

It belongs to the FBPase class 1 family. As to quaternary structure, homotetramer. It depends on Mg(2+) as a cofactor.

The protein resides in the cytoplasm. It carries out the reaction beta-D-fructose 1,6-bisphosphate + H2O = beta-D-fructose 6-phosphate + phosphate. It functions in the pathway carbohydrate biosynthesis; gluconeogenesis. In Cytophaga hutchinsonii (strain ATCC 33406 / DSM 1761 / CIP 103989 / NBRC 15051 / NCIMB 9469 / D465), this protein is Fructose-1,6-bisphosphatase class 1.